The primary structure comprises 560 residues: DNA-directed primase/polymerase protein (560 aa).

Residues 1 to 22 adopt a coiled-coil conformation; the sequence is MNRKWEAKLKQIEERASHYERK. Residues arginine 76, 114 to 116, and 165 to 169 contribute to the substrate site; these read DLE and KFSRH. 2 residues coordinate Mn(2+): aspartate 114 and glutamate 116. Positions 203-223 are disordered; the sequence is EDDDSAPETTGHGFPHFSEAP. At serine 255 the chain carries Phosphoserine. Substrate is bound by residues 288–291 and lysine 297; that span reads RNFR. Zn(2+) is bound by residues cysteine 419, histidine 426, cysteine 446, and cysteine 451. The Zinc knuckle motif signature appears at 419–452; sequence CENIGRAHKSNNIMILVDLKNEVWYQKCHDPVCK. Residues 480–507 are disordered; sequence TTDEADETRSNETQNPHKPSPSRLSTGA. The segment at 481–560 is interaction with RPA1; sequence TDEADETRSN…DELIIEVLQE (80 aa). The span at 490–507 shows a compositional bias: polar residues; the sequence is NETQNPHKPSPSRLSTGA. 2 consecutive short sequence motifs (RPA1-binding motif) follow at residues 513–527 and 548–556; these read WDNGIDDAYFLEATE and EIPDELIIE.

Belongs to the eukaryotic-type primase small subunit family. In terms of assembly, interacts with RPA1; leading to recruitment to chromatin and stimulate DNA primase activity. Interacts with SSBP1. Interacts with POLDIP2; leading to enhance DNA polymerase activity. The cofactor is Mn(2+).

Its subcellular location is the nucleus. It is found in the mitochondrion matrix. The protein localises to the chromosome. It catalyses the reaction ssDNA + n NTP = ssDNA/pppN(pN)n-1 hybrid + (n-1) diphosphate.. The enzyme catalyses DNA(n) + a 2'-deoxyribonucleoside 5'-triphosphate = DNA(n+1) + diphosphate. Its function is as follows. DNA primase and DNA polymerase required to tolerate replication-stalling lesions by bypassing them. Required to facilitate mitochondrial and nuclear replication fork progression by initiating de novo DNA synthesis using dNTPs and acting as an error-prone DNA polymerase able to bypass certain DNA lesions. Shows a high capacity to tolerate DNA damage lesions such as 8oxoG and abasic sites in DNA. Provides different translesion synthesis alternatives when DNA replication is stalled: able to synthesize DNA primers downstream of lesions, such as ultraviolet (UV) lesions, R-loops and G-quadruplexes, to allow DNA replication to continue. Can also realign primers ahead of 'unreadable lesions' such as abasic sites and 6-4 photoproduct (6-4 pyrimidine-pyrimidinone), thereby skipping the lesion. Repriming avoids fork degradation while leading to accumulation of internal ssDNA gaps behind the forks. Also able to incorporate nucleotides opposite DNA lesions such as 8oxoG, like a regular translesion synthesis DNA polymerase. Also required for reinitiating stalled forks after UV damage during nuclear DNA replication. Required for mitochondrial DNA (mtDNA) synthesis and replication, by reinitiating synthesis after UV damage or in the presence of chain-terminating nucleotides. Prevents APOBEC family-mediated DNA mutagenesis by repriming downstream of abasic site to prohibit error-prone translesion synthesis. Has non-overlapping function with POLH. In addition to its role in DNA damage response, also required to maintain efficient nuclear and mitochondrial DNA replication in unperturbed cells. The chain is DNA-directed primase/polymerase protein from Homo sapiens (Human).